A 160-amino-acid polypeptide reads, in one-letter code: Nucleotide-binding protein Bpet3698 (160 aa).

Belongs to the YajQ family.

Nucleotide-binding protein. The protein is Nucleotide-binding protein Bpet3698 of Bordetella petrii (strain ATCC BAA-461 / DSM 12804 / CCUG 43448).